Here is a 468-residue protein sequence, read N- to C-terminus: Ubiquitin carboxyl-terminal hydrolase MINDY-1 (468 aa).

Positions Met1–Thr19 are enriched in polar residues. Positions Met1 to Arg105 are disordered. The span at Ser22–Ala41 shows a compositional bias: basic and acidic residues. The span at Ala43–Asp54 shows a compositional bias: low complexity. Positions Cys68–Pro80 are enriched in pro residues. Ser103 carries the phosphoserine modification. Cys137 (nucleophile) is an active-site residue. His319 acts as the Proton acceptor in catalysis. Residues Gln388–Gln427 form a ubiquitin-binding domain (UBD) region. Residues Glu423–Gln432 show a composition bias toward low complexity. The segment at Glu423–Leu468 is disordered. Phosphoserine is present on Ser440. Positions Ala452–Leu468 are enriched in basic and acidic residues.

Belongs to the MINDY deubiquitinase family. FAM63 subfamily.

It catalyses the reaction Thiol-dependent hydrolysis of ester, thioester, amide, peptide and isopeptide bonds formed by the C-terminal Gly of ubiquitin (a 76-residue protein attached to proteins as an intracellular targeting signal).. Its function is as follows. Hydrolase that can specifically remove 'Lys-48'-linked conjugated ubiquitin from proteins. Has exodeubiquitinase activity and has a preference for long polyubiquitin chains. May play a regulatory role at the level of protein turnover. The sequence is that of Ubiquitin carboxyl-terminal hydrolase MINDY-1 (Mindy1) from Mus musculus (Mouse).